Here is a 155-residue protein sequence, read N- to C-terminus: Myosin light chain alkali (155 aa).

EF-hand domains are found at residues 7 to 41 (REVE…LNLN) and 80 to 115 (GCYE…LGES).

Myosin is a hexamer of 2 heavy chains and 4 light chains. As to expression, indirect flight muscle isoform is found only in the indirect flight muscles. The larval and adult isoform is present in the larval and adult musculature.

This is Myosin light chain alkali (Mlc1) from Drosophila melanogaster (Fruit fly).